The chain runs to 346 residues: GTP-binding RHO-like protein (346 aa).

Residues 1–10 are compositionally biased toward basic residues; it reads MTPNGSRRHS. Residues 1–25 form a disordered region; it reads MTPNGSRRHSAYMGSPRSQHSSTME. Residues 16-25 are compositionally biased toward polar residues; the sequence is PRSQHSSTME. 82–89 contributes to the GTP binding site; the sequence is GDGGCGKT. The Effector region motif lies at 104–112; the sequence is YVPTVFENY. GTP is bound by residues 130 to 134 and 188 to 191; these read DTAGQ and TKSD. The interval 259–294 is disordered; it reads LGGSNGGSGNHSRHHSRNYSNVSNNRRGHLKNTSYD. The residue at position 343 (cysteine 343) is a Cysteine methyl ester. Cysteine 343 carries S-geranylgeranyl cysteine lipidation. Residues 344–346 constitute a propeptide, removed in mature form; sequence VIL.

The protein belongs to the small GTPase superfamily. Rho family.

It is found in the cell membrane. This chain is GTP-binding RHO-like protein (CRL1), found in Candida albicans (strain WO-1) (Yeast).